A 369-amino-acid polypeptide reads, in one-letter code: Anhydro-N-acetylmuramic acid kinase (369 aa).

G12–D19 contacts ATP.

Belongs to the anhydro-N-acetylmuramic acid kinase family.

It catalyses the reaction 1,6-anhydro-N-acetyl-beta-muramate + ATP + H2O = N-acetyl-D-muramate 6-phosphate + ADP + H(+). The protein operates within amino-sugar metabolism; 1,6-anhydro-N-acetylmuramate degradation. It functions in the pathway cell wall biogenesis; peptidoglycan recycling. Catalyzes the specific phosphorylation of 1,6-anhydro-N-acetylmuramic acid (anhMurNAc) with the simultaneous cleavage of the 1,6-anhydro ring, generating MurNAc-6-P. Is required for the utilization of anhMurNAc either imported from the medium or derived from its own cell wall murein, and thus plays a role in cell wall recycling. The sequence is that of Anhydro-N-acetylmuramic acid kinase from Shewanella sp. (strain W3-18-1).